A 217-amino-acid polypeptide reads, in one-letter code: Putative thymidylate synthase (217 aa).

Cys139 is a catalytic residue.

It belongs to the thymidylate synthase family. Archaeal-type ThyA subfamily. In terms of assembly, monomer.

Its subcellular location is the cytoplasm. Its pathway is pyrimidine metabolism; dTTP biosynthesis. Functionally, may catalyze the biosynthesis of dTMP using an unknown cosubstrate. In Methanosarcina mazei (strain ATCC BAA-159 / DSM 3647 / Goe1 / Go1 / JCM 11833 / OCM 88) (Methanosarcina frisia), this protein is Putative thymidylate synthase.